The sequence spans 296 residues: MAMVQPKSQKLRLLITHLGLLIFIAAIMFPLLMVIAISLREGNFATGSLIPDKISWEHWRLALGFSVEHADGRVTPPPFPVLLWLWNSVKIAGITAIGIVALSTTCAYAFARMRFPGKATLLKGMLIFQMFPAVLSLVALYALFDRLGQYIPFIGLNTHGGVIFAYLGGIALHVWTIKGYFETIDSSLEEAAALDGATPWQAFRLVLLPLSVPILAVVFILSFIAAITEVPVASLLLRDVDSYTLAVGMQQYLNPQNYLWGDFAAAAVLSAIPITLVFLLAQRWLVNGLTAGGVKG.

At 1–12 (MAMVQPKSQKLR) the chain is on the cytoplasmic side. A helical membrane pass occupies residues 13–35 (LLITHLGLLIFIAAIMFPLLMVI). Over 36–88 (AISLREGNFATGSLIPDKISWEHWRLALGFSVEHADGRVTPPPFPVLLWLWNS) the chain is Periplasmic. In terms of domain architecture, ABC transmembrane type-1 spans 85–281 (LWNSVKIAGI…IPITLVFLLA (197 aa)). Residues 89–111 (VKIAGITAIGIVALSTTCAYAFA) traverse the membrane as a helical segment. Residues 112-123 (RMRFPGKATLLK) are Cytoplasmic-facing. A helical transmembrane segment spans residues 124 to 143 (GMLIFQMFPAVLSLVALYAL). The Periplasmic portion of the chain corresponds to 144-152 (FDRLGQYIP). A helical membrane pass occupies residues 153–175 (FIGLNTHGGVIFAYLGGIALHVW). Topologically, residues 176-204 (TIKGYFETIDSSLEEAAALDGATPWQAFR) are cytoplasmic. The helical transmembrane segment at 205 to 227 (LVLLPLSVPILAVVFILSFIAAI) threads the bilayer. Residues 228–257 (TEVPVASLLLRDVDSYTLAVGMQQYLNPQN) are Periplasmic-facing. Residues 258-280 (YLWGDFAAAAVLSAIPITLVFLL) traverse the membrane as a helical segment. At 281–296 (AQRWLVNGLTAGGVKG) the chain is on the cytoplasmic side.

The protein belongs to the binding-protein-dependent transport system permease family. MalFG subfamily. As to quaternary structure, the complex is composed of two ATP-binding proteins (MalK), two transmembrane proteins (MalG and MalF) and a solute-binding protein (MalE).

Its subcellular location is the cell inner membrane. Functionally, part of the ABC transporter complex MalEFGK involved in maltose/maltodextrin import. Probably responsible for the translocation of the substrate across the membrane. This Salmonella typhimurium (strain LT2 / SGSC1412 / ATCC 700720) protein is Maltose/maltodextrin transport system permease protein MalG (malG).